Consider the following 828-residue polypeptide: Outer membrane usher protein MrkC (828 aa).

An N-terminal signal peptide occupies residues 1-18 (MKQRSICPGRLSTAIAVA). The cysteines at positions 813 and 827 are disulfide-linked.

Belongs to the fimbrial export usher family.

The protein localises to the cell outer membrane. Functionally, involved in the export and assembly of the type 3 fimbrial subunit (MrkA). This is Outer membrane usher protein MrkC (mrkC) from Klebsiella pneumoniae.